The primary structure comprises 231 residues: Small ribosomal subunit protein uS3 (231 aa).

In terms of domain architecture, KH type-2 spans 39–107; sequence IRELLHKELK…DVVLNIVEIR (69 aa).

This sequence belongs to the universal ribosomal protein uS3 family. Part of the 30S ribosomal subunit. Forms a tight complex with proteins S10 and S14.

Its function is as follows. Binds the lower part of the 30S subunit head. Binds mRNA in the 70S ribosome, positioning it for translation. The polypeptide is Small ribosomal subunit protein uS3 (Nitrobacter winogradskyi (strain ATCC 25391 / DSM 10237 / CIP 104748 / NCIMB 11846 / Nb-255)).